We begin with the raw amino-acid sequence, 497 residues long: Long chain base biosynthesis protein 2c (497 aa).

The chain crosses the membrane as a helical span at residues 4–24; the sequence is VPFVTAVTTVFSYGVIFGFGH. Lysine 319 bears the N6-(pyridoxal phosphate)lysine mark.

This sequence belongs to the class-II pyridoxal-phosphate-dependent aminotransferase family. As to quaternary structure, heterodimer with LCB1. Component of the serine palmitoyltransferase (SPT) complex, composed of LCB1 and LCB2. Requires pyridoxal 5'-phosphate as cofactor.

The protein resides in the endoplasmic reticulum membrane. The enzyme catalyses L-serine + hexadecanoyl-CoA + H(+) = 3-oxosphinganine + CO2 + CoA. The protein operates within lipid metabolism; sphingolipid metabolism. Functionally, serine palmitoyltransferase (SPT). The heterodimer formed with LCB1 constitutes the catalytic core. The sequence is that of Long chain base biosynthesis protein 2c from Oryza sativa subsp. japonica (Rice).